The sequence spans 278 residues: Chitosanase (278 aa).

A signal peptide spans 1–41 (MRLKHPTARLALAALLVAVPRSVAAAGTVHAAPAPAGATRL). The Proton donor role is filled by Glu63. The Nucleophile role is filled by Asp81.

Belongs to the glycosyl hydrolase 46 family.

The protein localises to the secreted. The catalysed reaction is Endohydrolysis of beta-(1-&gt;4)-linkages between D-glucosamine residues in a partly acetylated chitosan.. Aids in the defense against invading fungal pathogens by degrading their cell wall chitosan. The sequence is that of Chitosanase (csn) from Nocardioides sp. (strain N106).